A 508-amino-acid polypeptide reads, in one-letter code: NADH-quinone oxidoreductase subunit N 1 (508 aa).

The next 13 membrane-spanning stretches (helical) occupy residues 2–22 (ILGP…GALL), 47–67 (ALGT…VGFV), 87–107 (FTLF…LLAG), 126–146 (FSTV…LFLG), 175–195 (FLLG…IYGA), 220–240 (ALLL…VSAV), 260–280 (FMAV…LLGA), 291–311 (AGWP…ANLI), 321–341 (MLAY…AATV), 351–371 (VMFY…TLIL), 396–416 (ALAF…AGFF), 431–453 (YTLS…RVLV), and 479–499 (LVVS…SLGI).

This sequence belongs to the complex I subunit 2 family. NDH-1 is composed of 14 different subunits. Subunits NuoA, H, J, K, L, M, N constitute the membrane sector of the complex.

Its subcellular location is the cell inner membrane. It carries out the reaction a quinone + NADH + 5 H(+)(in) = a quinol + NAD(+) + 4 H(+)(out). In terms of biological role, NDH-1 shuttles electrons from NADH, via FMN and iron-sulfur (Fe-S) centers, to quinones in the respiratory chain. The immediate electron acceptor for the enzyme in this species is believed to be ubiquinone. Couples the redox reaction to proton translocation (for every two electrons transferred, four hydrogen ions are translocated across the cytoplasmic membrane), and thus conserves the redox energy in a proton gradient. The sequence is that of NADH-quinone oxidoreductase subunit N 1 from Sorangium cellulosum (strain So ce56) (Polyangium cellulosum (strain So ce56)).